The following is a 1151-amino-acid chain: Importin beta (1151 aa).

24 HEAT repeats span residues Met-1 to Glu-36, Pro-37 to Asn-82, Pro-83 to Phe-132, Pro-133 to Gly-175, Gly-176 to Ile-222, Pro-223 to Lys-269, Pro-270 to Lys-316, Ala-317 to Phe-377, Pro-378 to Lys-416, Glu-417 to Ala-453, Pro-454 to Lys-495, Ala-496 to Asp-540, Phe-541 to Leu-593, Pro-594 to Phe-642, Pro-643 to Thr-704, Pro-705 to Ser-756, Pro-757 to Glu-811, Thr-812 to Asp-880, Leu-881 to Ser-932, Pro-933 to Asp-978, Pro-979 to Phe-1027, Pro-1028 to Asp-1074, Pro-1075 to Gln-1120, and Ile-1121 to Gln-1151.

Belongs to the importin beta family.

Its subcellular location is the nucleus intermembrane space. It is found in the cytoplasm. The protein localises to the nucleus. In terms of biological role, functions in nuclear protein import as nuclear transport receptor. Involved in encystation process. Constitutive expression enhances cyst production and increases transcription of endogenous genes involved in encystation. Level of mRNA of the transcriptional factor myb1-like protein increases in early stages of the encystation process followed by increased mRNAs of the cyst wall proteins cwp1-3. This Giardia intestinalis (strain ATCC 50803 / WB clone C6) (Giardia lamblia) protein is Importin beta.